Reading from the N-terminus, the 206-residue chain is Large ribosomal subunit protein uL4 (206 aa).

Residues 43 to 78 (ARSGNRKQKDREEVKHTTKKPWRQKGTGRARAGMSS) are disordered. The span at 49-58 (KQKDREEVKH) shows a compositional bias: basic and acidic residues. Residues 59–70 (TTKKPWRQKGTG) show a composition bias toward basic residues.

Belongs to the universal ribosomal protein uL4 family. Part of the 50S ribosomal subunit.

Its function is as follows. One of the primary rRNA binding proteins, this protein initially binds near the 5'-end of the 23S rRNA. It is important during the early stages of 50S assembly. It makes multiple contacts with different domains of the 23S rRNA in the assembled 50S subunit and ribosome. Functionally, forms part of the polypeptide exit tunnel. This Cupriavidus metallidurans (strain ATCC 43123 / DSM 2839 / NBRC 102507 / CH34) (Ralstonia metallidurans) protein is Large ribosomal subunit protein uL4.